The chain runs to 73 residues: Translation initiation factor IF-1 (73 aa).

Residues 1-73 form the S1-like domain; that stretch reads MAKKDGAIEV…SRGRIVYRYK (73 aa).

This sequence belongs to the IF-1 family. Component of the 30S ribosomal translation pre-initiation complex which assembles on the 30S ribosome in the order IF-2 and IF-3, IF-1 and N-formylmethionyl-tRNA(fMet); mRNA recruitment can occur at any time during PIC assembly.

It is found in the cytoplasm. Its function is as follows. One of the essential components for the initiation of protein synthesis. Stabilizes the binding of IF-2 and IF-3 on the 30S subunit to which N-formylmethionyl-tRNA(fMet) subsequently binds. Helps modulate mRNA selection, yielding the 30S pre-initiation complex (PIC). Upon addition of the 50S ribosomal subunit IF-1, IF-2 and IF-3 are released leaving the mature 70S translation initiation complex. This chain is Translation initiation factor IF-1, found in Mycolicibacterium smegmatis (strain ATCC 700084 / mc(2)155) (Mycobacterium smegmatis).